Reading from the N-terminus, the 486-residue chain is Glutamyl-tRNA(Gln) amidotransferase subunit A (486 aa).

Active-site charge relay system residues include Lys77 and Ser152. The Acyl-ester intermediate role is filled by Ser176.

This sequence belongs to the amidase family. GatA subfamily. In terms of assembly, heterotrimer of A, B and C subunits.

The enzyme catalyses L-glutamyl-tRNA(Gln) + L-glutamine + ATP + H2O = L-glutaminyl-tRNA(Gln) + L-glutamate + ADP + phosphate + H(+). Its function is as follows. Allows the formation of correctly charged Gln-tRNA(Gln) through the transamidation of misacylated Glu-tRNA(Gln) in organisms which lack glutaminyl-tRNA synthetase. The reaction takes place in the presence of glutamine and ATP through an activated gamma-phospho-Glu-tRNA(Gln). In Pediococcus pentosaceus (strain ATCC 25745 / CCUG 21536 / LMG 10740 / 183-1w), this protein is Glutamyl-tRNA(Gln) amidotransferase subunit A.